A 372-amino-acid polypeptide reads, in one-letter code: Putative glutamate--cysteine ligase 2 (372 aa).

Belongs to the glutamate--cysteine ligase type 2 family. YbdK subfamily. Homodimer.

The catalysed reaction is L-cysteine + L-glutamate + ATP = gamma-L-glutamyl-L-cysteine + ADP + phosphate + H(+). ATP-dependent carboxylate-amine ligase which exhibits weak glutamate--cysteine ligase activity. This is Putative glutamate--cysteine ligase 2 (ybdK) from Salmonella dublin (strain CT_02021853).